The primary structure comprises 629 residues: tRNA uridine 5-carboxymethylaminomethyl modification enzyme MnmG (629 aa).

FAD contacts are provided by residues glycine 13 to glycine 18, valine 125, and serine 180. Glycine 273–phenylalanine 287 provides a ligand contact to NAD(+). Residue glutamine 370 participates in FAD binding.

It belongs to the MnmG family. As to quaternary structure, homodimer. Heterotetramer of two MnmE and two MnmG subunits. The cofactor is FAD.

Its subcellular location is the cytoplasm. Its function is as follows. NAD-binding protein involved in the addition of a carboxymethylaminomethyl (cmnm) group at the wobble position (U34) of certain tRNAs, forming tRNA-cmnm(5)s(2)U34. In Aliivibrio fischeri (strain ATCC 700601 / ES114) (Vibrio fischeri), this protein is tRNA uridine 5-carboxymethylaminomethyl modification enzyme MnmG.